A 194-amino-acid chain; its full sequence is Putative manganese efflux pump MntP (194 aa).

6 helical membrane-spanning segments follow: residues 2-22 (ISII…AFAV), 43-63 (LWFG…ASTF), 67-87 (VTQF…GNMV), 111-131 (PLAV…AFMF), 137-157 (AFAI…GLHI), and 174-194 (GVVL…VIAF).

Belongs to the MntP (TC 9.B.29) family.

The protein resides in the cell membrane. Probably functions as a manganese efflux pump. The polypeptide is Putative manganese efflux pump MntP (Bifidobacterium longum (strain DJO10A)).